Reading from the N-terminus, the 288-residue chain is 4-hydroxy-tetrahydrodipicolinate synthase (288 aa).

Threonine 47 is a binding site for pyruvate. Residue tyrosine 136 is the Proton donor/acceptor of the active site. Catalysis depends on lysine 164, which acts as the Schiff-base intermediate with substrate. Isoleucine 204 provides a ligand contact to pyruvate.

The protein belongs to the DapA family. As to quaternary structure, homotetramer; dimer of dimers.

The protein localises to the cytoplasm. The catalysed reaction is L-aspartate 4-semialdehyde + pyruvate = (2S,4S)-4-hydroxy-2,3,4,5-tetrahydrodipicolinate + H2O + H(+). It participates in amino-acid biosynthesis; L-lysine biosynthesis via DAP pathway; (S)-tetrahydrodipicolinate from L-aspartate: step 3/4. Catalyzes the condensation of (S)-aspartate-beta-semialdehyde [(S)-ASA] and pyruvate to 4-hydroxy-tetrahydrodipicolinate (HTPA). This Leuconostoc mesenteroides subsp. mesenteroides (strain ATCC 8293 / DSM 20343 / BCRC 11652 / CCM 1803 / JCM 6124 / NCDO 523 / NBRC 100496 / NCIMB 8023 / NCTC 12954 / NRRL B-1118 / 37Y) protein is 4-hydroxy-tetrahydrodipicolinate synthase.